The primary structure comprises 237 residues: MATDNVHIGEIEKFGSHAHRWWDPDGELKTLHAVNPLRMQFIQAHTSLAGRKAVDVGCGGGILTEALAKAGADALGIDLSEDLLGTAEEHCRESGLTVAYRQISAEALADSQPGEFDVVTCMEMLEHVPDPASVVAACTRLAKPGGTVFFSTLNRSLKAYLLAIVGAEYLLRMIPRGTHDFASFIRPSELSRWARDGGLDLAGMEGIGYNPITGQFHLTSDIGVNYLAAFRKPAAAG.

The S-adenosyl-L-methionine site is built by arginine 38, glycine 57, aspartate 78, and methionine 122.

Belongs to the methyltransferase superfamily. UbiG/COQ3 family.

The enzyme catalyses a 3-demethylubiquinol + S-adenosyl-L-methionine = a ubiquinol + S-adenosyl-L-homocysteine + H(+). It catalyses the reaction a 3-(all-trans-polyprenyl)benzene-1,2-diol + S-adenosyl-L-methionine = a 2-methoxy-6-(all-trans-polyprenyl)phenol + S-adenosyl-L-homocysteine + H(+). It functions in the pathway cofactor biosynthesis; ubiquinone biosynthesis. Its function is as follows. O-methyltransferase that catalyzes the 2 O-methylation steps in the ubiquinone biosynthetic pathway. This Methylococcus capsulatus (strain ATCC 33009 / NCIMB 11132 / Bath) protein is Ubiquinone biosynthesis O-methyltransferase.